The following is a 651-amino-acid chain: Protein SCARECROW 1 (651 aa).

Disordered regions lie at residues 1 to 33 (MGSSSLLLFPSSSSSATHSSYSPSSSSHAITSL) and 188 to 277 (SDPA…KQRD). The segment covering 190–228 (PAPPPPPPPSHPALLPPDATAPPPPPTSVAALPPPPPPQ) has biased composition (pro residues). Residues 253–280 (TAEETAAAAAAAKERKEEQRRKQRDEEG) adopt a coiled-coil conformation. The span at 254–263 (AEETAAAAAA) shows a compositional bias: low complexity. Residues 264–277 (AKERKEEQRRKQRD) show a composition bias toward basic and acidic residues. A GRAS domain is found at 274 to 644 (KQRDEEGLHL…LCLLTASAWR (371 aa)). Residues 281 to 345 (LHLLTLLLQC…VSSCLGLYAP (65 aa)) are leucine repeat I (LRI). A LxCxE motif motif is present at residues 288 to 292 (LQCAE). Positions 364–429 (FQVFNGISPF…GGPPRVRLTG (66 aa)) are VHIID. Residues 395 to 399 (VHIID) carry the VHIID motif. The tract at residues 439–471 (ATGKRLSDFADTLGLPFEFCPVADKAGNLDPEK) is leucine repeat II (LRII). Residues 480–567 (VAVHWLRHSL…QQLLSREIRN (88 aa)) form a PFYRE region. Residues 570 to 644 (AVGGPARTGD…LCLLTASAWR (75 aa)) form an SAW region.

Belongs to the GRAS family. In terms of assembly, interacts with SHR1, but not with SHR2. As to expression, expressed in the initial daughter cell before its asymmetric division and remains expressed in the endodermal cell layer after the division.

The protein resides in the nucleus. Functionally, transcription factor required for quiescent center cells specification and maintenance of surrounding stem cells, and for the asymmetric cell division involved in radial pattern formation in roots. Essential for cell division but not differentiation of the ground tissue. Regulates the radial organization of the shoot axial organs. Restricts SHR movment and sequesters it into the nucleus of the endodermis. This Oryza sativa subsp. japonica (Rice) protein is Protein SCARECROW 1 (SCR1).